A 255-amino-acid chain; its full sequence is Electron transfer flavoprotein subunit beta (255 aa).

Ala-2 is subject to N-acetylalanine. Residues Ala-9, 39–42 (NPFC), Cys-66, and 123–134 (GKQAIDDDCNQT) contribute to the AMP site. The interval 183–205 (ADLRLNEPRYATLPNIMKAKKKK) is recognition loop. Lys-200 carries the post-translational modification N6,N6,N6-trimethyllysine; by ETFBKMT; alternate. An N6-acetyllysine; alternate modification is found at Lys-200. At Lys-200 the chain carries N6-methyllysine; alternate. Lys-203 bears the N6,N6,N6-trimethyllysine; by ETFBKMT mark. The residue at position 210 (Lys-210) is an N6-acetyllysine; alternate. An N6-succinyllysine; alternate modification is found at Lys-210. Ser-223 and Ser-226 each carry phosphoserine. Lys-238 is modified (N6-acetyllysine). Lys-248 bears the N6-acetyllysine; alternate mark. Lys-248 carries the N6-succinyllysine; alternate modification.

This sequence belongs to the ETF beta-subunit/FixA family. Heterodimer composed of ETFA and ETFB. Identified in a complex that contains ETFA, ETFB and ETFRF1. Interacts with ACADM. In terms of processing, methylated. Trimethylation at Lys-200 and Lys-203 may negatively regulate the activity in electron transfer from acyl-CoA dehydrogenases.

It is found in the mitochondrion matrix. Its function is as follows. Heterodimeric electron transfer flavoprotein that accepts electrons from several mitochondrial dehydrogenases, including acyl-CoA dehydrogenases, glutaryl-CoA and sarcosine dehydrogenase. It transfers the electrons to the main mitochondrial respiratory chain via ETF-ubiquinone oxidoreductase. Required for normal mitochondrial fatty acid oxidation and normal amino acid metabolism. ETFB binds an AMP molecule that probably has a purely structural role. This is Electron transfer flavoprotein subunit beta from Pongo abelii (Sumatran orangutan).